We begin with the raw amino-acid sequence, 294 residues long: 2-oxo-3-(phosphooxy)propyl 3-oxoalkanoate synthase (294 aa).

This sequence belongs to the AfsA family.

It carries out the reaction a medium-chain 3-oxoacyl-[ACP] + dihydroxyacetone phosphate = a (4-alkanoyl-5-oxo-2,5-dihydrofuran-3-yl)methyl phosphate + holo-[ACP] + H2O. Involved in the biosynthesis of virginiae butanolide (VB), a gamma-butyrolactone autoregulator that triggers the production of the streptogramin antibiotic virginiamycin. The sequence is that of 2-oxo-3-(phosphooxy)propyl 3-oxoalkanoate synthase from Streptomyces virginiae (Streptomyces cinnamonensis).